The chain runs to 392 residues: Type III polyketide synthase B (392 aa).

57–64 is a CoA binding site; sequence KLTRLCKT. Residue C166 is the Nucleophile of the active site. Substrate is bound at residue 218–219; the sequence is GD. Residues L269, 309–312, and A312 contribute to the CoA site; that span reads GGPA.

This sequence belongs to the thiolase-like superfamily. Chalcone/stilbene synthases family. As to quaternary structure, homodimer. Interacts with 4CLL1/ACOS5 and TKPR1. As to expression, expressed in flowers and flower buds (at protein level). Mostly confined to anther tapetal cells.

It is found in the endoplasmic reticulum. Its pathway is secondary metabolite biosynthesis; flavonoid biosynthesis. Its function is as follows. Plant type III polyketide synthases (PKSs) that catalyzes the condensation of malonyl-CoA units with various CoA ester starter molecules to generate a diverse array of natural products including long-chain alkyl alpha-pyrones. Accepts up to C(20) chain-length fatty acyl CoAs as starter substrates, and carries out sequential condensations with malonyl-CoA to produce triketide and tetraketide alpha-pyrones, potential sporopollenin precursors. Favorite substrates for are midchain- and v-hydroxylated fatty acyl-CoAs (e.g. 12-hydroxyoctadecanoyl-CoA and 16-hydroxyhexadecanoyl-CoA). Required for pollen development and sporopollenin biosynthesis, the major constituent of exine in the outer pollen wall. In vitro, can use 4-coumaroyl-coenzyme A as substrate to produce bis-noryangonin and fatty acyl-coenzyme A as substrate to produce medium-chain alkyl pyrones. May play a role in both the synthesis of pollen fatty acids and phenolics found in exine. The sequence is that of Type III polyketide synthase B from Arabidopsis thaliana (Mouse-ear cress).